We begin with the raw amino-acid sequence, 848 residues long: Adenylate cyclase (848 aa).

The tract at residues 1–535 (MYLYIETLKQ…DVSHHFPLRL (535 aa)) is catalytic. The tract at residues 541-848 (KALYSPCEIR…DAPLLQQYFS (308 aa)) is regulatory. His-609 bears the Phosphohistidine; by CRR mark.

It belongs to the adenylyl cyclase class-1 family.

The protein localises to the cytoplasm. The enzyme catalyses ATP = 3',5'-cyclic AMP + diphosphate. This Escherichia coli O6:H1 (strain CFT073 / ATCC 700928 / UPEC) protein is Adenylate cyclase (cyaA).